Reading from the N-terminus, the 215-residue chain is Probable nicotinate-nucleotide adenylyltransferase (215 aa).

It belongs to the NadD family.

It carries out the reaction nicotinate beta-D-ribonucleotide + ATP + H(+) = deamido-NAD(+) + diphosphate. It participates in cofactor biosynthesis; NAD(+) biosynthesis; deamido-NAD(+) from nicotinate D-ribonucleotide: step 1/1. In terms of biological role, catalyzes the reversible adenylation of nicotinate mononucleotide (NaMN) to nicotinic acid adenine dinucleotide (NaAD). This chain is Probable nicotinate-nucleotide adenylyltransferase, found in Shewanella putrefaciens (strain CN-32 / ATCC BAA-453).